A 56-amino-acid chain; its full sequence is Large ribosomal subunit protein bL33A (56 aa).

Belongs to the bacterial ribosomal protein bL33 family.

The sequence is that of Large ribosomal subunit protein bL33A from Nocardia farcinica (strain IFM 10152).